A 305-amino-acid polypeptide reads, in one-letter code: Maximins-S type B/C (305 aa).

Positions 1–18 (MNFNYFILVLFFITSGHA) are cleaved as a signal peptide. 2 consecutive propeptides follow at residues 19–35 (KSET…HIKR) and 52–65 (SAEE…LVTR). Asn83 carries the post-translational modification Asparagine amide. A propeptide spanning residues 87 to 100 (SAEEQDLAEHLVTR) is cleaved from the precursor. An Asparagine amide modification is found at Asn118. Residues 122 to 135 (SAEEQDLAEDLVTR) constitute a propeptide that is removed on maturation. At Lys153 the chain carries Lysine amide. Positions 157 to 170 (SAEDQDLAEDLVTR) are excised as a propeptide. Asn188 is modified (asparagine amide). A propeptide spanning residues 192–205 (SAEEQDLAEHLVTR) is cleaved from the precursor. Asparagine amide is present on Asn223. Residues 227-240 (SAEEQDLSEDLVTR) constitute a propeptide that is removed on maturation. Asn258 bears the Asparagine amide mark. Positions 262–275 (SAEEQDLVEDLVTR) are excised as a propeptide. Lys293 is modified (lysine amide). Positions 297–305 (SAEQEKDMK) are excised as a propeptide.

The protein belongs to the maximin-S family. In terms of tissue distribution, expressed by the skin dorsal glands.

It is found in the secreted. Maximin-S1 has no antimicrobial activity. Has no hemolytic activity. In terms of biological role, maximin-S2 has an activity against mycoplasma but has no activity against common Gram-positive and Gram-negative bacteria nor fungi. Has no hemolytic activity. Its function is as follows. Maximin-S3 has an activity against mycoplasma but has no activity against common Gram-positive and Gram-negative bacteria nor fungi. Has no hemolytic activity. Functionally, maximin-S4 has an activity against mycoplasma but has no activity against common Gram-positive and Gram-negative bacteria nor fungi. Has no hemolytic activity. Maximin-S5 has an activity against mycoplasma but has no activity against common Gram-positive and Gram-negative bacteria nor fungi. Has no hemolytic activity. This chain is Maximins-S type B/C, found in Bombina maxima (Giant fire-bellied toad).